Consider the following 296-residue polypeptide: tRNA dimethylallyltransferase (296 aa).

An ATP-binding site is contributed by 11–18 (GPTAVGKT). 13-18 (TAVGKT) serves as a coordination point for substrate. An interaction with substrate tRNA region spans residues 36–39 (DSQQ).

This sequence belongs to the IPP transferase family. As to quaternary structure, monomer. Mg(2+) is required as a cofactor.

It catalyses the reaction adenosine(37) in tRNA + dimethylallyl diphosphate = N(6)-dimethylallyladenosine(37) in tRNA + diphosphate. In terms of biological role, catalyzes the transfer of a dimethylallyl group onto the adenine at position 37 in tRNAs that read codons beginning with uridine, leading to the formation of N6-(dimethylallyl)adenosine (i(6)A). The chain is tRNA dimethylallyltransferase from Streptococcus agalactiae serotype III (strain NEM316).